A 305-amino-acid chain; its full sequence is MDMFQKVEKIGEGTYGVVYKAKNRETGQLVALKKIRLDLEMEGVPSTAIREISLLKELKHPNIVRLLDVVHNERKLYLVFEFLSQDLKKYMDSTPGSELPLHLIKSYLFQLLQGVSFCHSHRVIHRDLKPQNLLINELGAIKLADFGLARAFGVPLRTYTHEVVTLWYRAPEILLGSKFYTTAVDIWSIGCIFAEMVTRKALFPGDSEIDQLFRIFRMLGTPSEDTWPGVTQLPDYKGSFPKWTRKGLEEIVPNLEPEGRDLLMQLLQYDPSQRITAKTALAHPYFSSPEPSPAARQYVLQRFRH.

Residues 4-286 enclose the Protein kinase domain; sequence FQKVEKIGEG…AKTALAHPYF (283 aa). ATP is bound by residues 10 to 18 and Lys-33; that span reads IGEGTYGVV. Asp-127 functions as the Proton acceptor in the catalytic mechanism.

The protein belongs to the protein kinase superfamily. CMGC Ser/Thr protein kinase family. CDC2/CDKX subfamily. In terms of assembly, interacts with CABLES1 and CABLES2. Interacts with ATF1. Binding to CCNC/cyclin-C promotes RB1 phosphorylation. As to expression, expressed in cancer cell lines and glioblastoma tissue.

The enzyme catalyses L-seryl-[protein] + ATP = O-phospho-L-seryl-[protein] + ADP + H(+). It catalyses the reaction L-threonyl-[protein] + ATP = O-phospho-L-threonyl-[protein] + ADP + H(+). In terms of biological role, serine/threonine-protein kinase that plays a critical role in the control of the eukaryotic cell cycle; involved in G0-G1 and G1-S cell cycle transitions. Interacts with CCNC/cyclin-C during interphase. Phosphorylates histone H1, ATF1, RB1 and CABLES1. ATF1 phosphorylation triggers ATF1 transactivation and transcriptional activities, and promotes cell proliferation and transformation. CDK3/cyclin-C mediated RB1 phosphorylation is required for G0-G1 transition. Promotes G1-S transition probably by contributing to the activation of E2F1, E2F2 and E2F3 in a RB1-independent manner. The sequence is that of Cyclin-dependent kinase 3 (CDK3) from Homo sapiens (Human).